We begin with the raw amino-acid sequence, 124 residues long: Fluoride-specific ion channel FluC 2 (124 aa).

Helical transmembrane passes span 1 to 21 (MNFL…YAIT), 36 to 58 (SNLP…FIFG), 63 to 85 (VFIY…TMNT), and 104 to 124 (LSSY…AILF). Residues Gly75 and Thr78 each coordinate Na(+).

The protein belongs to the fluoride channel Fluc/FEX (TC 1.A.43) family. As to quaternary structure, heterodimer composed of FluC1 and FluC2. Neither FluC1 nor FluC2 alone catalyzes fluoride efflux from liposomes.

Its subcellular location is the cell membrane. The enzyme catalyses fluoride(in) = fluoride(out). Na(+) is not transported, but it plays an essential structural role and its presence is essential for fluoride channel function. Its function is as follows. Fluoride-specific ion channel. Important for reducing fluoride concentration in the cell, thus reducing its toxicity. This is Fluoride-specific ion channel FluC 2 from Lactobacillus acidophilus (strain ATCC 700396 / NCK56 / N2 / NCFM).